The primary structure comprises 485 residues: 3-isopropylmalate dehydratase large subunit (485 aa).

The [4Fe-4S] cluster site is built by Cys367, Cys427, and Cys430. Positions Ser439–Asn451 are enriched in polar residues. Positions Ser439–Thr462 are disordered.

It belongs to the aconitase/IPM isomerase family. LeuC type 1 subfamily. In terms of assembly, heterodimer of LeuC and LeuD. [4Fe-4S] cluster serves as cofactor.

It catalyses the reaction (2R,3S)-3-isopropylmalate = (2S)-2-isopropylmalate. The protein operates within amino-acid biosynthesis; L-leucine biosynthesis; L-leucine from 3-methyl-2-oxobutanoate: step 2/4. Catalyzes the isomerization between 2-isopropylmalate and 3-isopropylmalate, via the formation of 2-isopropylmaleate. The protein is 3-isopropylmalate dehydratase large subunit of Actinoplanes teichomyceticus.